The following is a 270-amino-acid chain: Regulatory protein RecX (270 aa).

Belongs to the RecX family.

The protein localises to the cytoplasm. Its function is as follows. Modulates RecA activity. The protein is Regulatory protein RecX of Bacillus thuringiensis subsp. konkukian (strain 97-27).